The chain runs to 226 residues: 3-dehydroquinate dehydratase (226 aa).

3-dehydroquinate contacts are provided by residues 33 to 35 (EWR) and Arg-65. His-121 functions as the Proton donor/acceptor in the catalytic mechanism. Residue Lys-146 is the Schiff-base intermediate with substrate of the active site. Arg-188, Ser-207, and Gln-211 together coordinate 3-dehydroquinate.

Belongs to the type-I 3-dehydroquinase family. As to quaternary structure, homodimer.

It carries out the reaction 3-dehydroquinate = 3-dehydroshikimate + H2O. Its pathway is metabolic intermediate biosynthesis; chorismate biosynthesis; chorismate from D-erythrose 4-phosphate and phosphoenolpyruvate: step 3/7. Functionally, involved in the third step of the chorismate pathway, which leads to the biosynthesis of aromatic amino acids. Catalyzes the cis-dehydration of 3-dehydroquinate (DHQ) and introduces the first double bond of the aromatic ring to yield 3-dehydroshikimate. This Lactococcus lactis subsp. lactis (strain IL1403) (Streptococcus lactis) protein is 3-dehydroquinate dehydratase.